A 179-amino-acid chain; its full sequence is Large ribosomal subunit protein uL5 (179 aa).

This sequence belongs to the universal ribosomal protein uL5 family. As to quaternary structure, part of the 50S ribosomal subunit; part of the 5S rRNA/L5/L18/L25 subcomplex. Contacts the 5S rRNA and the P site tRNA. Forms a bridge to the 30S subunit in the 70S ribosome.

Functionally, this is one of the proteins that bind and probably mediate the attachment of the 5S RNA into the large ribosomal subunit, where it forms part of the central protuberance. In the 70S ribosome it contacts protein S13 of the 30S subunit (bridge B1b), connecting the 2 subunits; this bridge is implicated in subunit movement. Contacts the P site tRNA; the 5S rRNA and some of its associated proteins might help stabilize positioning of ribosome-bound tRNAs. This is Large ribosomal subunit protein uL5 from Pseudomonas fluorescens (strain ATCC BAA-477 / NRRL B-23932 / Pf-5).